A 256-amino-acid polypeptide reads, in one-letter code: Ubiquinone/menaquinone biosynthesis C-methyltransferase UbiE (256 aa).

The segment covering 1–12 (MTDPRKGDHAEP) has biased composition (basic and acidic residues). Positions 1-21 (MTDPRKGDHAEPTTHFGYQDV) are disordered. S-adenosyl-L-methionine-binding positions include Thr-79, Asp-100, and 128–129 (DA).

Belongs to the class I-like SAM-binding methyltransferase superfamily. MenG/UbiE family.

The catalysed reaction is a 2-demethylmenaquinol + S-adenosyl-L-methionine = a menaquinol + S-adenosyl-L-homocysteine + H(+). The enzyme catalyses a 2-methoxy-6-(all-trans-polyprenyl)benzene-1,4-diol + S-adenosyl-L-methionine = a 5-methoxy-2-methyl-3-(all-trans-polyprenyl)benzene-1,4-diol + S-adenosyl-L-homocysteine + H(+). Its pathway is quinol/quinone metabolism; menaquinone biosynthesis; menaquinol from 1,4-dihydroxy-2-naphthoate: step 2/2. It participates in cofactor biosynthesis; ubiquinone biosynthesis. Methyltransferase required for the conversion of demethylmenaquinol (DMKH2) to menaquinol (MKH2) and the conversion of 2-polyprenyl-6-methoxy-1,4-benzoquinol (DDMQH2) to 2-polyprenyl-3-methyl-6-methoxy-1,4-benzoquinol (DMQH2). The protein is Ubiquinone/menaquinone biosynthesis C-methyltransferase UbiE of Pseudomonas entomophila (strain L48).